The chain runs to 1669 residues: Collagen alpha-3(IV) chain (1669 aa).

Residues Met1 to Ser28 form the signal peptide. Residues Lys29 to Ala42 form a 7S domain region. Residues Gly43–Pro1436 form a triple-helical region region. Disordered regions lie at residues Thr44–Ser473 and Pro500–Gly1439. Over residues Pro54–Pro68 the composition is skewed to low complexity. The span at Pro105–Pro114 shows a compositional bias: pro residues. Asn126 carries an N-linked (GlcNAc...) asparagine glycan. Pro residues predominate over residues Pro188–Pro200. Positions Phe202 to Pro211 are enriched in low complexity. A glycan (N-linked (GlcNAc...) asparagine) is linked at Asn253. Residues Ser255–Glu269 show a composition bias toward basic and acidic residues. 2 stretches are compositionally biased toward low complexity: residues Pro279–Pro290 and Ser382–Pro393. Over residues Pro416 to Cys437 the composition is skewed to pro residues. Positions Asn551–Leu560 are enriched in low complexity. Pro residues-rich tracts occupy residues Pro596–Tyr617 and Leu654–Gln665. Residues Ala666–Gly684 are compositionally biased toward low complexity. Residues Gly778–Gly787 show a composition bias toward gly residues. The Cell attachment site motif lies at Arg830–Asp832. Positions Cys861–Ala876 are enriched in low complexity. Residues Lys922–Lys939 show a composition bias toward basic and acidic residues. A compositionally biased stretch (low complexity) spans Arg970 to Pro985. The short motif at Arg994–Asp996 is the Cell attachment site element. The span at Ser1092–Ser1103 shows a compositional bias: low complexity. Pro residues predominate over residues Pro1128–Pro1146. Residues Arg1152–Asp1154 carry the Cell attachment site motif. Residues Pro1228–Pro1248 show a composition bias toward low complexity. The span at Glu1250 to Pro1259 shows a compositional bias: pro residues. The short motif at Arg1304–Asp1306 is the Cell attachment site element. Pro residues predominate over residues Pro1333–Arg1343. Low complexity-rich tracts occupy residues Gln1366–Pro1379 and Pro1402–Asn1429. Positions Gly1425–Arg1443 are epitope recognized by Goodpasture antibodies. The Collagen IV NC1 domain occupies Gly1444–Arg1668. Disulfide bonds link Cys1459-Cys1550, Cys1492-Cys1547, Cys1504-Cys1510, Cys1569-Cys1664, Cys1603-Cys1661, and Cys1615-Cys1621. The segment at Asn1478–Ala1556 is required for the anti-angiogenic activity of tumstatin. Met1532 participates in a covalent cross-link: S-Lysyl-methionine sulfilimine (Met-Lys) (interchain with K-1650). The tract at residues Ala1609–Ser1627 is required for the anti-tumor cell activity of tumstatin. Lys1650 is covalently cross-linked (S-Lysyl-methionine sulfilimine (Lys-Met) (interchain with M-1532)).

The protein belongs to the type IV collagen family. As to quaternary structure, there are six type IV collagen isoforms, alpha 1(IV)-alpha 6(IV), each of which can form a triple helix structure with 2 other chains to generate type IV collagen network. The alpha 3(IV) chain forms a triple helical protomer with alpha 4(IV) and alpha 5(IV); this triple helical structure dimerizes through NC1-NC1 domain interactions such that the alpha 3(IV), alpha 4(IV) and alpha 5(IV) chains of one protomer connect with the alpha 5(IV), alpha 4(IV) and alpha 3(IV) chains of the opposite promoter, respectively. Interacts with ITGB3. Associates with LAMB2 at the neuromuscular junction and in GBM. In terms of processing, prolines at the third position of the tripeptide repeating unit (G-X-Y) are hydroxylated in some or all of the chains. Post-translationally, type IV collagens contain numerous cysteine residues which are involved in inter- and intramolecular disulfide bonding. 12 of these, located in the NC1 domain, are conserved in all known type IV collagens. The trimeric structure of the NC1 domains is stabilized by covalent bonds between Lys and Met residues. In terms of processing, phosphorylated. Thought to be phosphorylated by CERT, but CERT does not have kinase activity. Highly expressed in kidney and lung. Detected at lower levels in heart, muscle and skin.

The protein localises to the secreted. It localises to the extracellular space. It is found in the extracellular matrix. The protein resides in the basement membrane. In terms of biological role, type IV collagen is the major structural component of glomerular basement membranes (GBM), forming a 'chicken-wire' meshwork together with laminins, proteoglycans and entactin/nidogen. Its function is as follows. Tumstatin, a cleavage fragment corresponding to the collagen alpha 3(IV) NC1 domain, possesses both anti-angiogenic and anti-tumor cell activity; these two anti-tumor properties may be regulated via RGD-independent ITGB3-mediated mechanisms. This is Collagen alpha-3(IV) chain from Mus musculus (Mouse).